A 270-amino-acid polypeptide reads, in one-letter code: Putative phosphoenolpyruvate synthase regulatory protein (270 aa).

154–161 (GVSRAGKT) provides a ligand contact to ADP.

It belongs to the pyruvate, phosphate/water dikinase regulatory protein family. PSRP subfamily.

It carries out the reaction [pyruvate, water dikinase] + ADP = [pyruvate, water dikinase]-phosphate + AMP + H(+). The enzyme catalyses [pyruvate, water dikinase]-phosphate + phosphate + H(+) = [pyruvate, water dikinase] + diphosphate. Its function is as follows. Bifunctional serine/threonine kinase and phosphorylase involved in the regulation of the phosphoenolpyruvate synthase (PEPS) by catalyzing its phosphorylation/dephosphorylation. This chain is Putative phosphoenolpyruvate synthase regulatory protein, found in Deinococcus geothermalis (strain DSM 11300 / CIP 105573 / AG-3a).